Reading from the N-terminus, the 465-residue chain is Poly(A) polymerase I (465 aa).

Residues aspartate 80, aspartate 82, and aspartate 162 contribute to the active site. The segment at 429–465 (SAPPDQKGMLNELDEEPSPRRRTRRPRKRAPRREGTA) is disordered. The segment covering 448 to 459 (RRRTRRPRKRAP) has biased composition (basic residues).

The protein belongs to the tRNA nucleotidyltransferase/poly(A) polymerase family.

It carries out the reaction RNA(n) + ATP = RNA(n)-3'-adenine ribonucleotide + diphosphate. Functionally, adds poly(A) tail to the 3' end of many RNAs, which usually targets these RNAs for decay. Plays a significant role in the global control of gene expression, through influencing the rate of transcript degradation, and in the general RNA quality control. The sequence is that of Poly(A) polymerase I from Escherichia coli O157:H7.